A 364-amino-acid polypeptide reads, in one-letter code: Aminomethyltransferase (364 aa).

The protein belongs to the GcvT family. As to quaternary structure, the glycine cleavage system is composed of four proteins: P, T, L and H.

The catalysed reaction is N(6)-[(R)-S(8)-aminomethyldihydrolipoyl]-L-lysyl-[protein] + (6S)-5,6,7,8-tetrahydrofolate = N(6)-[(R)-dihydrolipoyl]-L-lysyl-[protein] + (6R)-5,10-methylene-5,6,7,8-tetrahydrofolate + NH4(+). Functionally, the glycine cleavage system catalyzes the degradation of glycine. This chain is Aminomethyltransferase, found in Klebsiella pneumoniae subsp. pneumoniae (strain ATCC 700721 / MGH 78578).